The sequence spans 413 residues: Serine hydroxymethyltransferase (413 aa).

(6S)-5,6,7,8-tetrahydrofolate is bound by residues L117 and 121–123 (GHL). K226 is subject to N6-(pyridoxal phosphate)lysine. 349–351 (SPF) serves as a coordination point for (6S)-5,6,7,8-tetrahydrofolate.

It belongs to the SHMT family. Homodimer. Pyridoxal 5'-phosphate serves as cofactor.

The protein resides in the cytoplasm. It catalyses the reaction (6R)-5,10-methylene-5,6,7,8-tetrahydrofolate + glycine + H2O = (6S)-5,6,7,8-tetrahydrofolate + L-serine. It functions in the pathway one-carbon metabolism; tetrahydrofolate interconversion. Its pathway is amino-acid biosynthesis; glycine biosynthesis; glycine from L-serine: step 1/1. Its function is as follows. Catalyzes the reversible interconversion of serine and glycine with tetrahydrofolate (THF) serving as the one-carbon carrier. This reaction serves as the major source of one-carbon groups required for the biosynthesis of purines, thymidylate, methionine, and other important biomolecules. Also exhibits THF-independent aldolase activity toward beta-hydroxyamino acids, producing glycine and aldehydes, via a retro-aldol mechanism. This chain is Serine hydroxymethyltransferase, found in Listeria welshimeri serovar 6b (strain ATCC 35897 / DSM 20650 / CCUG 15529 / CIP 8149 / NCTC 11857 / SLCC 5334 / V8).